Consider the following 246-residue polypeptide: MEGGASNEVAESSKKIGRGKIEIKRIENTTNRQVTFCKRRNGLLKKAYELSVLCDAEVALVIFSTRGRLYEYANNSVRGTIERYKKACSDAVNPPTITEANTQYYQQEASKLRRQIRDIQNLNRHILGESLGSLNFKELKNLESRLEKGISRVRSKKHEMLVAEIEYMQKREIELQNDNMYLRSKITERTGLQQQESSVIHQGTVYESGVTSSHQSGQYNRNYIAVNLLEPNQNSSNQDQPPLQLV.

Positions 18-72 (RGKIEIKRIENTTNRQVTFCKRRNGLLKKAYELSVLCDAEVALVIFSTRGRLYEY) constitute an MADS-box domain. Residues 102 to 192 (TQYYQQEASK…RSKITERTGL (91 aa)) form the K-box domain.

Interacts with AGL15 and AGL16.

It localises to the nucleus. Functionally, probable transcription factor. Interacts genetically with TT16/AGL32 in a partially antagonistic manner during flower development. Is essential for the coordination of cell divisions in ovule, seed coat development and endosperm formation. This Arabidopsis thaliana (Mouse-ear cress) protein is Agamous-like MADS-box protein AGL5 (AGL5).